The primary structure comprises 390 residues: Aspergillopepsin-1 (390 aa).

Positions 1–19 (MVNTSLLAALTAYAVAVAA) are cleaved as a signal peptide. Residues 20-67 (APTAPQVKGFSVNQVAVPKGVYRHPAAQLAKAYGKYHATVPTQVAAAA) constitute a propeptide, activation peptide. A Peptidase A1 domain is found at 84 to 387 (YITQVTVGDD…DASGPRLGFA (304 aa)). Catalysis depends on residues Asp100 and Asp281.

It belongs to the peptidase A1 family. Monomer.

The protein resides in the secreted. The catalysed reaction is Hydrolysis of proteins with broad specificity. Generally favors hydrophobic residues in P1 and P1', but also accepts Lys in P1, which leads to activation of trypsinogen. Does not clot milk.. Inhibited by the microbial peptide pepstatin A. Functionally, secreted aspartic endopeptidase that allows assimilation of proteinaceous substrates. The scissile peptide bond is attacked by a nucleophilic water molecule activated by two aspartic residues in the active site. Shows a broad primary substrate specificity. Favors hydrophobic residues at the P1 and P1' positions, but also accepts a lysine residue in the P1 position, leading to the activation of trypsinogen and chymotrypsinogen A. Hydrolyzes myoglobin, hemoglobin and other natural proteins. Hydrolyzes equine myoglobin between positions 'Met-1' and 'Gly-2', 'Lys-43' and 'Phe-44', and 'Leu-70' and 'Thr-71'. The polypeptide is Aspergillopepsin-1 (pepA) (Aspergillus pseudoglaucus (Eurotium repens)).